The primary structure comprises 295 residues: Glutamyl-Q tRNA(Asp) synthetase (295 aa).

L-glutamate is bound by residues 9–13 (RFAPT) and Glu45. The short motif at 12 to 22 (PTPSGFLHFGS) is the 'HIGH' region element. Zn(2+) contacts are provided by Cys101, Cys103, Tyr115, and Cys119. Positions 172 and 190 each coordinate L-glutamate. Residues 228-232 (KLGKS) carry the 'KMSKS' region motif. Position 231 (Lys231) interacts with ATP.

It belongs to the class-I aminoacyl-tRNA synthetase family. GluQ subfamily. Requires Zn(2+) as cofactor.

Catalyzes the tRNA-independent activation of glutamate in presence of ATP and the subsequent transfer of glutamate onto a tRNA(Asp). Glutamate is transferred on the 2-amino-5-(4,5-dihydroxy-2-cyclopenten-1-yl) moiety of the queuosine in the wobble position of the QUC anticodon. This Pseudomonas entomophila (strain L48) protein is Glutamyl-Q tRNA(Asp) synthetase.